The sequence spans 24 residues: Coenzyme PQQ synthesis protein A (24 aa).

The pyrroloquinoline quinone (Glu-Tyr) cross-link spans 16–20; the sequence is EITMY.

This sequence belongs to the PqqA family.

Its pathway is cofactor biosynthesis; pyrroloquinoline quinone biosynthesis. Its function is as follows. Required for coenzyme pyrroloquinoline quinone (PQQ) biosynthesis. PQQ is probably formed by cross-linking a specific glutamate to a specific tyrosine residue and excising these residues from the peptide. In Burkholderia cenocepacia (strain ATCC BAA-245 / DSM 16553 / LMG 16656 / NCTC 13227 / J2315 / CF5610) (Burkholderia cepacia (strain J2315)), this protein is Coenzyme PQQ synthesis protein A.